A 504-amino-acid polypeptide reads, in one-letter code: MEEFQGYLELDRFRQHDFLYPFIFREYSYALAHGHGLNRYMLLENIGYDNKSSLLIVKRLITTMYQQNYLIISANDSKQNPFFGYNKNLHSKILSEGFAIIVEIPFYLRLISSLEGAEIVRFYNLRSIHSIFPFLEEKFPHLNYSADILIPYPAHLEILVQTLRYRVKDASYLHLLRFFLHEYSNCNSLIITNKSISIFSKSNPRFFLFLYNSYLCEYESIFLFLRNQSSHLRLTSSGVLFERLCLYRKIEHFAEVFANDFPVIPCFLKDPFMHYVRYQGKSILASKDTPLLMNKWKSYLVNLWQCHFDVWSHAASIRINQLSKHSLDFLSYFSSVRRNPAVVRNQMLENSFLLNNAPNKLDTIVPIIPLIGSLAKAKFCNAVGHPISKLTRADLSDFEIINRFLHICRNLSHYYSGSSKKKNMYRIKYILRLSCVKTLARKHKSTARAFLKRVDSEFFQEFFTEEGGFISLIFPRASFALRRLYSGRVWYLDIIFINGLSNHE.

The protein belongs to the intron maturase 2 family. MatK subfamily.

The protein localises to the plastid. Its subcellular location is the chloroplast. Its function is as follows. Usually encoded in the trnK tRNA gene intron. Probably assists in splicing its own and other chloroplast group II introns. This chain is Maturase K, found in Quercus cerris (Turkey oak).